Reading from the N-terminus, the 520-residue chain is D-aminopeptidase (520 aa).

Catalysis depends on Ser62, which acts as the Nucleophile. The Proton donor/acceptor role is filled by Lys65. An important for specificity region spans residues 477–487 (QRSMDAPSPGE). Substrate is bound at residue Asp481.

This sequence belongs to the peptidase S12 family. In terms of assembly, homodimer.

It carries out the reaction Release of an N-terminal D-amino acid from a peptide, Xaa-|-Yaa-, in which Xaa is preferably D-Ala, D-Ser or D-Thr. D-amino acid amides and methyl esters also are hydrolyzed, as is glycine amide.. Its activity is regulated as follows. Inhibited by beta-lactam compounds such as 6-aminopenicillic acid, 7-aminocephalosporanic acid, benzylpenicillin and ampicillin. Inhibited by p-chloromercuribenzoate. Its function is as follows. Hydrolyzes N-terminal residues in D-amino acid-containing peptides. The polypeptide is D-aminopeptidase (dap) (Brucella anthropi (Ochrobactrum anthropi)).